The chain runs to 125 residues: Desulfoferrodoxin (125 aa).

The Fe cation site is built by H49, H69, H75, C115, and H118.

Belongs to the desulfoferrodoxin family. Cu(2+) is required as a cofactor.

It carries out the reaction reduced [rubredoxin] + superoxide + 2 H(+) = oxidized [rubredoxin] + H2O2. Its function is as follows. Catalyzes the reduction of superoxide to hydrogen peroxide, using electrons from NADH and NADH:rubredoxin oxidoreductase (NROR) and rubredoxin (Rd) as electron transport intermediaries between NADH and Dfx. Is a key factor in the superoxide reductase dependent part of a pathway for detoxification of reactive oxygen species (ROS) in C.acetobutylicum, an obligate anaerobic bacterium. This is Desulfoferrodoxin (dfx) from Clostridium acetobutylicum (strain ATCC 824 / DSM 792 / JCM 1419 / IAM 19013 / LMG 5710 / NBRC 13948 / NRRL B-527 / VKM B-1787 / 2291 / W).